Reading from the N-terminus, the 253-residue chain is 5-oxoprolinase subunit A (253 aa).

It belongs to the LamB/PxpA family. In terms of assembly, forms a complex composed of PxpA, PxpB and PxpC.

The catalysed reaction is 5-oxo-L-proline + ATP + 2 H2O = L-glutamate + ADP + phosphate + H(+). Catalyzes the cleavage of 5-oxoproline to form L-glutamate coupled to the hydrolysis of ATP to ADP and inorganic phosphate. This Bacillus cereus (strain 03BB102) protein is 5-oxoprolinase subunit A.